A 176-amino-acid chain; its full sequence is Pituitary adenylate cyclase-activating polypeptide (176 aa).

Residues 1-24 (MTMCSGARLALLVYGILMHSSVYG) form the signal peptide. Residues 25–80 (SPAASGLRFPGIRPENEVYDEDGNPQQDFYDSESLGVGSPASALRDAYALYYPAEE) constitute a propeptide that is removed on maturation. The segment at 98–135 (QPSARRSPADAHGQGLGWDPGGSADDDSEPLSKRHSDG) is disordered. Residues 150–158 (VKKYLAAVL) are important for receptor binding. Leucine 158 is subject to Leucine amide. Lysine 169 carries the lysine amide modification. Residues 173–176 (IPYL) constitute a propeptide that is removed on maturation.

Belongs to the glucagon family. In terms of assembly, interacts with ADCYAP1R1 (via N-terminal extracellular domain); both PACAP27 and PACAP38 neuropeptides function as ligand for the ADCYAP1R1 receptor, which modulates the activity of downstream effectors. Interacts with VIPR1 and VIPR2; functions as ligand for VIPR1 and VIPR2 receptors, which modulate the activity of downstream effectors.

It localises to the secreted. Functionally, PACAP is a neuropeptide involved in diverse array of physiological processes through activating the PACAP subfamily of class B1 G protein-coupled receptors: VIP receptor 1 (VIPR1), VIP receptor 2 (VIPR2), and PACAP type I receptor (ADCYAP1R1). Exerts neuroprotective and general cytoprotective effects due to anti-apoptotic, anti-inflammatory, and antioxidant actions. Promotes neuron projection development through the RAPGEF2/Rap1/B-Raf/ERK pathway. In chromaffin cells, induces long-lasting increase of intracellular calcium concentrations and neuroendocrine secretion. Involved in the control of glucose homeostasis, induces insulin secretion by pancreatic beta cells. PACAP exists in two bioactive forms from proteolysis of the same precursor protein, PACAP27 and PACAP38, which differ by eleven amino acid residues in the C-terminus. The polypeptide is Pituitary adenylate cyclase-activating polypeptide (ADCYAP1) (Bos taurus (Bovine)).